Consider the following 855-residue polypeptide: Spindle and centriole-associated protein 1 (855 aa).

The segment at 164–200 (QALNDVDGEEEGTVTSQSGESENENELDNSLNSQSNT) is disordered. The residue at position 235 (threonine 235) is a Phosphothreonine. Positions 300–311 (KPNLHALSKPKK) are enriched in basic residues. Residues 300 to 328 (KPNLHALSKPKKNMLSGSTTSADLPNRTN) are disordered. Residues 314-328 (LSGSTTSADLPNRTN) show a composition bias toward polar residues. A coiled-coil region spans residues 325-437 (NRTNSNLDVL…TQARLRQYMV (113 aa)). Residues serine 640 and serine 644 each carry the phosphoserine modification. Residues 725–751 (GSMEERIAELNRQSMEARGKLLQLIEQ) adopt a coiled-coil conformation. Phosphoserine is present on residues serine 760, serine 764, and serine 819. A disordered region spans residues 789 to 834 (EAPESSKCSTVSPVSEINTRRSSGATSNSCSPLNATSGSGRFTPLN). A compositionally biased stretch (polar residues) spans 794–828 (SKCSTVSPVSEINTRRSSGATSNSCSPLNATSGSG).

In terms of assembly, interacts with CEP120.

The protein resides in the cytoplasm. It localises to the cytoskeleton. The protein localises to the microtubule organizing center. Its subcellular location is the centrosome. It is found in the centriole. The protein resides in the spindle. In terms of biological role, regulator required for centriole duplication, for proper bipolar spindle formation and chromosome congression in mitosis. The chain is Spindle and centriole-associated protein 1 (SPICE1) from Pongo abelii (Sumatran orangutan).